We begin with the raw amino-acid sequence, 101 residues long: Protein Tat (101 aa).

Over residues 1–10 (MEPVDPRLEP) the composition is skewed to basic and acidic residues. Residues 1-20 (MEPVDPRLEPWNHPGSQPKT) form a disordered region. An interaction with human CREBBP region spans residues 1 to 24 (MEPVDPRLEPWNHPGSQPKTACNN). Residues 1–48 (MEPVDPRLEPWNHPGSQPKTACNNCYCKRCCYHCLYCFTKKGLGISYG) form a transactivation region. The Zn(2+) site is built by Cys22, Cys25, and Cys27. Residues 22–37 (CNNCYCKRCCYHCLYC) form a cysteine-rich region. An N6-acetyllysine; by host PCAF modification is found at Lys28. Residues Cys30, His33, Cys34, and Cys37 each contribute to the Zn(2+) site. Residues 38–48 (FTKKGLGISYG) are core. Positions 48–58 (GRKKRSQRRRT) are enriched in basic residues. The interval 48–101 (GRKKRSQRRRTPQSSKSHQDLIPEQPLSQQQGDQTGQKKQKEALESKTEADPCD) is disordered. Residues 49–57 (RKKRSQRRR) carry the Nuclear localization signal, RNA-binding (TAR), and protein transduction motif. Positions 49-86 (RKKRSQRRRTPQSSKSHQDLIPEQPLSQQQGDQTGQKK) are interaction with the host capping enzyme RNGTT. 2 positions are modified to N6-acetyllysine; by host EP300 and GCN5L2: Lys50 and Lys51. Arg52 carries the post-translational modification Asymmetric dimethylarginine; by host PRMT6. Residues 86–101 (KQKEALESKTEADPCD) are compositionally biased toward basic and acidic residues.

Belongs to the lentiviruses Tat family. In terms of assembly, interacts with host CCNT1. Associates with the P-TEFb complex composed at least of Tat, P-TEFb (CDK9 and CCNT1), TAR RNA, RNA Pol II. Recruits the HATs CREBBP, TAF1/TFIID, EP300, PCAF and GCN5L2. Interacts with host KAT5/Tip60; this interaction targets the latter to degradation. Interacts with the host deacetylase SIRT1. Interacts with host capping enzyme RNGTT; this interaction stimulates RNGTT. Binds to host KDR, and to the host integrins ITGAV/ITGB3 and ITGA5/ITGB1. Interacts with host KPNB1/importin beta-1 without previous binding to KPNA1/importin alpha-1. Interacts with EIF2AK2. Interacts with host nucleosome assembly protein NAP1L1; this interaction may be required for the transport of Tat within the nucleus, since the two proteins interact at the nuclear rim. Interacts with host C1QBP/SF2P32; this interaction involves lysine-acetylated Tat. Interacts with the host chemokine receptors CCR2, CCR3 and CXCR4. Interacts with host DPP4/CD26; this interaction may trigger an anti-proliferative effect. Interacts with host LDLR. Interacts with the host extracellular matrix metalloproteinase MMP1. Interacts with host PRMT6; this interaction mediates Tat's methylation. Interacts with, and is ubiquitinated by MDM2/Hdm2. Interacts with host PSMC3 and HTATIP2. Interacts with STAB1; this interaction may overcome SATB1-mediated repression of IL2 and IL2RA (interleukin) in T cells by binding to the same domain than HDAC1. Interacts (when acetylated) with human CDK13, thereby increasing HIV-1 mRNA splicing and promoting the production of the doubly spliced HIV-1 protein Nef. Interacts with host TBP; this interaction modulates the activity of transcriptional pre-initiation complex. Interacts with host RELA. Interacts with host PLSCR1; this interaction negatively regulates Tat transactivation activity by altering its subcellular distribution. In terms of processing, asymmetrical arginine methylation by host PRMT6 seems to diminish the transactivation capacity of Tat and affects the interaction with host CCNT1. Post-translationally, acetylation by EP300, CREBBP, GCN5L2/GCN5 and PCAF regulates the transactivation activity of Tat. EP300-mediated acetylation of Lys-50 promotes dissociation of Tat from the TAR RNA through the competitive binding to PCAF's bromodomain. In addition, the non-acetylated Tat's N-terminus can also interact with PCAF. PCAF-mediated acetylation of Lys-28 enhances Tat's binding to CCNT1. Lys-50 is deacetylated by SIRT1. Polyubiquitination by host MDM2 does not target Tat to degradation, but activates its transactivation function and fosters interaction with CCNT1 and TAR RNA. In terms of processing, phosphorylated by EIF2AK2 on serine and threonine residues adjacent to the basic region important for TAR RNA binding and function. Phosphorylation of Tat by EIF2AK2 is dependent on the prior activation of EIF2AK2 by dsRNA.

It is found in the host nucleus. Its subcellular location is the host nucleolus. It localises to the host cytoplasm. The protein resides in the secreted. Transcriptional activator that increases RNA Pol II processivity, thereby increasing the level of full-length viral transcripts. Recognizes a hairpin structure at the 5'-LTR of the nascent viral mRNAs referred to as the transactivation responsive RNA element (TAR) and recruits the cyclin T1-CDK9 complex (P-TEFb complex) that will in turn hyperphosphorylate the RNA polymerase II to allow efficient elongation. The CDK9 component of P-TEFb and other Tat-activated kinases hyperphosphorylate the C-terminus of RNA Pol II that becomes stabilized and much more processive. Other factors such as HTATSF1/Tat-SF1, SUPT5H/SPT5, and HTATIP2 are also important for Tat's function. Besides its effect on RNA Pol II processivity, Tat induces chromatin remodeling of proviral genes by recruiting the histone acetyltransferases (HATs) CREBBP, EP300 and PCAF to the chromatin. This also contributes to the increase in proviral transcription rate, especially when the provirus integrates in transcriptionally silent region of the host genome. To ensure maximal activation of the LTR, Tat mediates nuclear translocation of NF-kappa-B by interacting with host RELA. Through its interaction with host TBP, Tat may also modulate transcription initiation. Tat can reactivate a latently infected cell by penetrating in it and transactivating its LTR promoter. In the cytoplasm, Tat is thought to act as a translational activator of HIV-1 mRNAs. In terms of biological role, extracellular circulating Tat can be endocytosed by surrounding uninfected cells via the binding to several surface receptors such as CD26, CXCR4, heparan sulfate proteoglycans (HSPG) or LDLR. Neurons are rarely infected, but they internalize Tat via their LDLR. Through its interaction with nuclear HATs, Tat is potentially able to control the acetylation-dependent cellular gene expression. Modulates the expression of many cellular genes involved in cell survival, proliferation or in coding for cytokines or cytokine receptors. Tat plays a role in T-cell and neurons apoptosis. Tat induced neurotoxicity and apoptosis probably contribute to neuroAIDS. Circulating Tat also acts as a chemokine-like and/or growth factor-like molecule that binds to specific receptors on the surface of the cells, affecting many cellular pathways. In the vascular system, Tat binds to ITGAV/ITGB3 and ITGA5/ITGB1 integrins dimers at the surface of endothelial cells and competes with bFGF for heparin-binding sites, leading to an excess of soluble bFGF. The polypeptide is Protein Tat (Homo sapiens (Human)).